The primary structure comprises 249 residues: tRNA pseudouridine synthase A (249 aa).

Asp52 (nucleophile) is an active-site residue. Tyr111 contributes to the substrate binding site.

This sequence belongs to the tRNA pseudouridine synthase TruA family. As to quaternary structure, homodimer.

It carries out the reaction uridine(38/39/40) in tRNA = pseudouridine(38/39/40) in tRNA. Its function is as follows. Formation of pseudouridine at positions 38, 39 and 40 in the anticodon stem and loop of transfer RNAs. The protein is tRNA pseudouridine synthase A of Caulobacter sp. (strain K31).